Consider the following 352-residue polypeptide: Gap junction alpha-4 protein (352 aa).

The Cytoplasmic segment spans residues Gly-2 to Lys-23. Residues Ile-24–Gly-46 traverse the membrane as a helical segment. The Extracellular segment spans residues Asp-47 to Arg-76. Residues Tyr-77 to Leu-99 traverse the membrane as a helical segment. Over Ser-100 to Thr-153 the chain is Cytoplasmic. Residues Tyr-154–Tyr-176 traverse the membrane as a helical segment. The Extracellular portion of the chain corresponds to Gly-177–Phe-208. A helical transmembrane segment spans residues Ile-209–Ile-231. The Cytoplasmic portion of the chain corresponds to Cys-232–Val-352. Positions His-332–Val-352 are disordered. Low complexity predominate over residues Thr-340–Val-352.

Belongs to the connexin family. Alpha-type (group II) subfamily. In terms of assembly, a connexon is composed of a hexamer of connexins. In terms of tissue distribution, expressed in ovarian somatic cells, heart, leg muscle, liver and eye but not in brain.

It is found in the cell membrane. The protein resides in the cell junction. The protein localises to the gap junction. One gap junction consists of a cluster of closely packed pairs of transmembrane channels, the connexons, through which materials of low MW diffuse from one cell to a neighboring cell. This Xenopus laevis (African clawed frog) protein is Gap junction alpha-4 protein (gja4).